A 359-amino-acid polypeptide reads, in one-letter code: Phospho-N-acetylmuramoyl-pentapeptide-transferase (359 aa).

Helical transmembrane passes span 27–47 (IGAA…FIRT), 71–91 (VPTM…LLWA), 93–113 (LDNP…MIGA), 134–154 (LLLQ…HPGY), 170–190 (LGWF…NAVN), 203–223 (MVVS…VVLA), 234–254 (SGEL…FLWF), 262–282 (FMGD…AIII), 286–306 (FLLA…MLQV), and 336–356 (KVVV…IATL).

Belongs to the glycosyltransferase 4 family. MraY subfamily. Mg(2+) is required as a cofactor.

Its subcellular location is the cell inner membrane. It catalyses the reaction UDP-N-acetyl-alpha-D-muramoyl-L-alanyl-gamma-D-glutamyl-meso-2,6-diaminopimeloyl-D-alanyl-D-alanine + di-trans,octa-cis-undecaprenyl phosphate = di-trans,octa-cis-undecaprenyl diphospho-N-acetyl-alpha-D-muramoyl-L-alanyl-D-glutamyl-meso-2,6-diaminopimeloyl-D-alanyl-D-alanine + UMP. The protein operates within cell wall biogenesis; peptidoglycan biosynthesis. Catalyzes the initial step of the lipid cycle reactions in the biosynthesis of the cell wall peptidoglycan: transfers peptidoglycan precursor phospho-MurNAc-pentapeptide from UDP-MurNAc-pentapeptide onto the lipid carrier undecaprenyl phosphate, yielding undecaprenyl-pyrophosphoryl-MurNAc-pentapeptide, known as lipid I. This Desulfotalea psychrophila (strain LSv54 / DSM 12343) protein is Phospho-N-acetylmuramoyl-pentapeptide-transferase.